Reading from the N-terminus, the 370-residue chain is Probable G-protein coupled receptor 85 (370 aa).

The Extracellular segment spans residues 1-25 (MANYSHAADNILQNLSPLTAFLKLT). N-linked (GlcNAc...) asparagine glycosylation is present at N3. Residues 26–46 (SLGFIIGVSVVGNLLISILLA) traverse the membrane as a helical segment. Over 47-57 (KDKTLHRAPYY) the chain is Cytoplasmic. A helical membrane pass occupies residues 58 to 78 (FLLDLCCSDILRSAICFPFVF). At 79–96 (NSVKNGSTWTYGTLTCKV) the chain is on the extracellular side. N-linked (GlcNAc...) asparagine glycosylation occurs at N83. Residues C94 and C172 are joined by a disulfide bond. Residues 97–117 (IAFLGVLSCFHTAFMLFCISV) traverse the membrane as a helical segment. At 118 to 137 (TRYLAIAHHRFYTKRLTFWT) the chain is on the cytoplasmic side. The chain crosses the membrane as a helical span at residues 138–158 (CLAVICMVWTLSVAMAFPPVL). Over 159–188 (DVGTYSFIREEDQCTFQHRSFRANDSLGFM) the chain is Extracellular. N-linked (GlcNAc...) asparagine glycosylation is present at N182. Residues 189–209 (LLLALILLATQLVYLKLIFFV) form a helical membrane-spanning segment. Residues 210–286 (HDRRKMKPVQ…FKMEKRISRM (77 aa)) lie on the Cytoplasmic side of the membrane. The helical transmembrane segment at 287 to 307 (FYIMTFLFLTLWGPYLVACYW) threads the bilayer. The Extracellular segment spans residues 308–313 (RVFARG). The chain crosses the membrane as a helical span at residues 314–334 (PVVPGGFLTAAVWMSFAQAGI). Topologically, residues 335–370 (NPFVCIFSNRELRRCFSTTLLYCRKSRLPREPYCVI) are cytoplasmic.

This sequence belongs to the G-protein coupled receptor 1 family. Interacts with DLG4 and DLG3.

It localises to the cell membrane. The protein localises to the endoplasmic reticulum. Orphan receptor. The sequence is that of Probable G-protein coupled receptor 85 (GPR85) from Pongo abelii (Sumatran orangutan).